Reading from the N-terminus, the 495-residue chain is Putative BTB/POZ domain-containing protein L98 (495 aa).

The BTB domain maps to 15–85 (SDLTIEFVDN…FYGIETTNDY (71 aa)).

This sequence belongs to the mimivirus BTB/WD family.

The polypeptide is Putative BTB/POZ domain-containing protein L98 (Acanthamoeba polyphaga (Amoeba)).